The sequence spans 184 residues: ATP synthase subunit b, chloroplastic (184 aa).

The helical transmembrane segment at 27–49 (LATNPINLSVVLGVLIFFGKGVL) threads the bilayer.

Belongs to the ATPase B chain family. As to quaternary structure, F-type ATPases have 2 components, F(1) - the catalytic core - and F(0) - the membrane proton channel. F(1) has five subunits: alpha(3), beta(3), gamma(1), delta(1), epsilon(1). F(0) has four main subunits: a(1), b(1), b'(1) and c(10-14). The alpha and beta chains form an alternating ring which encloses part of the gamma chain. F(1) is attached to F(0) by a central stalk formed by the gamma and epsilon chains, while a peripheral stalk is formed by the delta, b and b' chains.

The protein localises to the plastid. Its subcellular location is the chloroplast thylakoid membrane. Its function is as follows. F(1)F(0) ATP synthase produces ATP from ADP in the presence of a proton or sodium gradient. F-type ATPases consist of two structural domains, F(1) containing the extramembraneous catalytic core and F(0) containing the membrane proton channel, linked together by a central stalk and a peripheral stalk. During catalysis, ATP synthesis in the catalytic domain of F(1) is coupled via a rotary mechanism of the central stalk subunits to proton translocation. In terms of biological role, component of the F(0) channel, it forms part of the peripheral stalk, linking F(1) to F(0). The protein is ATP synthase subunit b, chloroplastic of Cucumis sativus (Cucumber).